The sequence spans 45 residues: Large ribosomal subunit protein bL34 (45 aa).

Composition is skewed to basic residues over residues 1–15 (MKAK…RKRA) and 22–45 (MKTK…IAIK). Residues 1-45 (MKAKSHLSNKKRKRASGFLARMKTKAGRKILARRRAKGRKRIAIK) are disordered.

The protein belongs to the bacterial ribosomal protein bL34 family.

This is Large ribosomal subunit protein bL34 from Sulfurihydrogenibium sp. (strain YO3AOP1).